The chain runs to 521 residues: Vang-like protein 2-A (521 aa).

The tract at residues 1 to 81 is disordered; sequence MDNDSQYSGY…TTVVTGTSEH (81 aa). At 1 to 108 the chain is on the cytoplasmic side; the sequence is MDNDSQYSGY…AKLDCSRHLG (108 aa). Over residues 15–33 the composition is skewed to basic residues; sequence GHSRSSRKHRDRRERHRSK. Residues 57 to 67 are compositionally biased toward basic and acidic residues; sequence ESTRGEDRDDN. Low complexity predominate over residues 69–81; it reads GETTTVVTGTSEH. The chain crosses the membrane as a helical span at residues 109 to 129; sequence VVIGGALALLSFLTPIAFMLL. Over 130 to 147 the chain is Extracellular; sequence PQILWREDLEQCGTACEG. A helical membrane pass occupies residues 148–168; sequence LFISVAFKLLILLLGSWALFF. At 169-178 the chain is on the cytoplasmic side; it reads RRPKAFFPRV. A helical membrane pass occupies residues 179-199; the sequence is FVFRALLMVLVFLLVVSYWLF. Residues 200–218 are Extracellular-facing; it reads YGVRILESRDKNYQGIVQY. A helical transmembrane segment spans residues 219–239; sequence AVSLVDALLFVHYLAVVLLEL. Over 240-521 the chain is Cytoplasmic; the sequence is RQLQPQFTIK…VMRLQSETSV (282 aa). Positions 518-521 match the PDZ-binding motif; it reads ETSV.

The protein belongs to the Vang family. As to quaternary structure, interacts with dvl/dsh. Interacts with prickle3. In terms of tissue distribution, during gastrulation, broadly expressed throughout the marginal zone and animal cap region. From the neurula stages, expression becomes concentrated in neural tissues, in the neural plate and neural tube.

The protein resides in the cell membrane. Functionally, has a role in non-canonical Wnt/planar cell polarity (PCP) signaling; can recruit dvl/dsh and prickle from the cytoplasm to the plasma membrane. Acts in a PCP complex to regulate the polarized assembly of fibronectrin on the surface of the mesoderm during gastrulation. Regulates convergent extension cell movements in both dorsal mesoderm and neural tissue during gastrulation, without affecting cell fate. Regulates neural fold closure during neurulation. May be required for cell surface localization of fzd3 and fzd6 in the inner ear. The sequence is that of Vang-like protein 2-A (vangl2-a) from Xenopus laevis (African clawed frog).